The chain runs to 449 residues: MTTRILTGITTTGTPHLGNYAGAIRPAIRASQQPGVDSFYFLADYHALIKCDDPLRIQRSRLEIAATWLAGGLDPDKVTFYRQSDIPEIPELTWLLTCVAAKGLLNRAHAYKASVDKNVENGEDPDAGVTMGLFSYPVLMAADILMFNANKVPVGRDQIQHVEMARDIGQRFNHLFGQGKDFFALPEAVIEESVATLPGLDGRKMSKSYDNTIPLFTSAKDMKDAISRIVTDSRAPGEAKDPDNAHLFTLYQAFSTPEQCAGFREELLQGLGWGDAKQRLFQLLDGQLAEKREYYHQLIARPADLEDILLAGAAKARKIATPFLEQLREAVGLRSFRSSVQATAEVKKKATKSARFVSFRDEDGSFRFRLLAADGEQLLLSRSFADGKSAGAVSKQLQQGGEADVRIEGLSFGLWLNGEQVADGPQFDNAEARDAAIQSLNEALAPQQD.

ATP is bound by residues 10–12 and 18–19; these read TTT and GN. The short motif at 11-19 is the 'HIGH' region element; sequence TTGTPHLGN. Aspartate 143 serves as a coordination point for L-tryptophan. Residues 155–157, leucine 197, and 204–208 contribute to the ATP site; these read GRD and KMSKS. A 'KMSKS' region motif is present at residues 204–208; the sequence is KMSKS.

It belongs to the class-I aminoacyl-tRNA synthetase family. As to quaternary structure, homodimer.

The protein localises to the cytoplasm. The catalysed reaction is tRNA(Trp) + L-tryptophan + ATP = L-tryptophyl-tRNA(Trp) + AMP + diphosphate + H(+). Functionally, catalyzes the attachment of tryptophan to tRNA(Trp). The chain is Tryptophan--tRNA ligase from Pseudomonas putida (strain ATCC 47054 / DSM 6125 / CFBP 8728 / NCIMB 11950 / KT2440).